The chain runs to 258 residues: 4-hydroxy-2-oxovalerate aldolase (258 aa).

Residue histidine 48 is the Proton acceptor of the active site. Glutamine 149 provides a ligand contact to substrate. Residue glutamate 151 participates in Mg(2+) binding. Positions 176 and 177 each coordinate substrate. A Mg(2+)-binding site is contributed by aspartate 177.

Belongs to the HpcH/HpaI aldolase family.

It carries out the reaction (S)-4-hydroxy-2-oxopentanoate = acetaldehyde + pyruvate. Its pathway is xenobiotic degradation; biphenyl degradation. In terms of biological role, catalyzes the reversible retro-aldol cleavage of 4-hydroxy-2-oxovalerate to pyruvate and acetaldehyde. In Rhodococcus jostii (strain RHA1), this protein is 4-hydroxy-2-oxovalerate aldolase (bphF).